We begin with the raw amino-acid sequence, 82 residues long: uncharacterized protein (82 aa).

The region spanning 1–82 is the 2Fe-2S ferredoxin-type domain; sequence MKIHLIRHNT…HVESDIEIDL (82 aa). Positions 35, 40, 43, and 72 each coordinate [2Fe-2S] cluster.

[2Fe-2S] cluster is required as a cofactor.

This is an uncharacterized protein from Haemophilus influenzae (strain ATCC 51907 / DSM 11121 / KW20 / Rd).